The chain runs to 68 residues: Large ribosomal subunit protein bL35 (68 aa).

The protein belongs to the bacterial ribosomal protein bL35 family.

The sequence is that of Large ribosomal subunit protein bL35 from Orientia tsutsugamushi (strain Ikeda) (Rickettsia tsutsugamushi).